A 349-amino-acid chain; its full sequence is Flap endonuclease 1 (349 aa).

The tract at residues 1-98 is N-domain; it reads MDLGEIVEDV…EEIERRKRAK (98 aa). Mg(2+) contacts are provided by aspartate 27, aspartate 80, glutamate 152, glutamate 154, aspartate 173, aspartate 175, and aspartate 236. Positions 116–258 are I-domain; it reads EIRKYAQAAV…TALRIIKKYN (143 aa). The tract at residues 341 to 349 is interaction with PCNA; that stretch reads KQTGLDQWF.

The protein belongs to the XPG/RAD2 endonuclease family. FEN1 subfamily. In terms of assembly, interacts with PCNA. PCNA stimulates the nuclease activity without altering cleavage specificity. Requires Mg(2+) as cofactor.

In terms of biological role, structure-specific nuclease with 5'-flap endonuclease and 5'-3' exonuclease activities involved in DNA replication and repair. During DNA replication, cleaves the 5'-overhanging flap structure that is generated by displacement synthesis when DNA polymerase encounters the 5'-end of a downstream Okazaki fragment. Binds the unpaired 3'-DNA end and kinks the DNA to facilitate 5' cleavage specificity. Cleaves one nucleotide into the double-stranded DNA from the junction in flap DNA, leaving a nick for ligation. Also involved in the base excision repair (BER) pathway. Acts as a genome stabilization factor that prevents flaps from equilibrating into structures that lead to duplications and deletions. Also possesses 5'-3' exonuclease activity on nicked or gapped double-stranded DNA. The sequence is that of Flap endonuclease 1 from Sulfolobus acidocaldarius (strain ATCC 33909 / DSM 639 / JCM 8929 / NBRC 15157 / NCIMB 11770).